The following is a 280-amino-acid chain: Probable endonuclease 4 (280 aa).

Zn(2+) contacts are provided by His-69, His-109, Glu-145, Asp-179, His-182, His-216, Asp-229, His-231, and Glu-261.

Belongs to the AP endonuclease 2 family. Requires Zn(2+) as cofactor.

The catalysed reaction is Endonucleolytic cleavage to 5'-phosphooligonucleotide end-products.. Functionally, endonuclease IV plays a role in DNA repair. It cleaves phosphodiester bonds at apurinic or apyrimidinic (AP) sites, generating a 3'-hydroxyl group and a 5'-terminal sugar phosphate. This is Probable endonuclease 4 from Actinobacillus pleuropneumoniae serotype 5b (strain L20).